The following is a 557-amino-acid chain: Probable protein kinase UbiB (557 aa).

The Protein kinase domain maps to 121-509; that stretch reads SFDTVPLASA…RKLQTRVVTA (389 aa). ATP-binding positions include 127 to 135 and Lys154; that span reads LASASIAQV. The Proton acceptor role is filled by Asp289. 2 helical membrane passes run 506–526 and 535–555; these read VVTA…YGLH and VPVW…VAWL.

The protein belongs to the ABC1 family. UbiB subfamily.

Its subcellular location is the cell inner membrane. It functions in the pathway cofactor biosynthesis; ubiquinone biosynthesis [regulation]. Its function is as follows. Is probably a protein kinase regulator of UbiI activity which is involved in aerobic coenzyme Q (ubiquinone) biosynthesis. The sequence is that of Probable protein kinase UbiB from Xanthomonas euvesicatoria pv. vesicatoria (strain 85-10) (Xanthomonas campestris pv. vesicatoria).